Consider the following 257-residue polypeptide: Ribonuclease HII (257 aa).

The RNase H type-2 domain maps to 72 to 257 (TYIAGIDEVG…FAPIKDMIQK (186 aa)). A divalent metal cation-binding residues include Asp78, Glu79, and Asp170.

Belongs to the RNase HII family. Requires Mn(2+) as cofactor. It depends on Mg(2+) as a cofactor.

Its subcellular location is the cytoplasm. The enzyme catalyses Endonucleolytic cleavage to 5'-phosphomonoester.. In terms of biological role, endonuclease that specifically degrades the RNA of RNA-DNA hybrids. The polypeptide is Ribonuclease HII (Bacillus cereus (strain G9842)).